We begin with the raw amino-acid sequence, 62 residues long: Small ribosomal subunit protein eS27 (62 aa).

Residues Cys17, Cys20, Cys36, and Cys39 each contribute to the Zn(2+) site. The segment at 17-39 (CPECNNEQIVFGSPATVVKCLTC) adopts a C4-type zinc-finger fold.

This sequence belongs to the eukaryotic ribosomal protein eS27 family. Part of the 30S ribosomal subunit. It depends on Zn(2+) as a cofactor.

The sequence is that of Small ribosomal subunit protein eS27 from Methanocaldococcus jannaschii (strain ATCC 43067 / DSM 2661 / JAL-1 / JCM 10045 / NBRC 100440) (Methanococcus jannaschii).